A 261-amino-acid polypeptide reads, in one-letter code: Sulfur carrier protein FdhD (261 aa).

C105 functions as the Cysteine persulfide intermediate in the catalytic mechanism. 245–250 contacts Mo-bis(molybdopterin guanine dinucleotide); the sequence is FIRGDR.

It belongs to the FdhD family.

Its subcellular location is the cytoplasm. Functionally, required for formate dehydrogenase (FDH) activity. Acts as a sulfur carrier protein that transfers sulfur from IscS to the molybdenum cofactor prior to its insertion into FDH. The chain is Sulfur carrier protein FdhD from Listeria monocytogenes serotype 4b (strain F2365).